The primary structure comprises 377 residues: MWTPSRRQLCLAFLLVCVLSAGSFFFHLNGGNFFRNGLTLSVLCSDYHLLKSPVAMVCLPHPLQTSNGSPSCPEQSSSLSGTWTITPGGRFGNQMGQYATLLALAQLNGRQAFIQPEMHAALAPVFRISLPVLDPEVDSLTPWQHLVLHDWMSEEYSHLEDPFLKLSGFPCSWTFFHHLREQIRREFTLHNHLREGAQYLLSGLRIGPAGIRPHTFVGVHVRRGDYLEVMPNRWKGVVGDRAYLQQAMDWFRARHKDPIFVVTSNGMKWCLENIDTSHGDVVFAGNGQEGTPGKDFALLTQCNHTIMTIGTFGFWAAYLAGGDTVYLANFTLPDSEFLKIFRPEAAFLPEWVGINADLSPLQAQFDPWKPDSLFRLV.

Residues 1-8 are Cytoplasmic-facing; the sequence is MWTPSRRQ. The helical; Signal-anchor for type II membrane protein transmembrane segment at 9–26 threads the bilayer; sequence LCLAFLLVCVLSAGSFFF. Residues 27 to 377 lie on the Lumenal side of the membrane; the sequence is HLNGGNFFRN…WKPDSLFRLV (351 aa). Residues Asn67, Asn303, and Asn329 are each glycosylated (N-linked (GlcNAc...) asparagine).

It belongs to the glycosyltransferase 11 family. In the adult, highly expressed in pancreas, testis and epididymis and to a lesser extent in thymus, lung, stomach, small intestine, colon, spleen and uterus. Not expressed in brain, heart, skeletal muscle, kidney, liver and bone marrow. Expressed in epididymis and testis.

The protein localises to the golgi apparatus. The protein resides in the golgi stack membrane. The catalysed reaction is a beta-D-galactosyl-(1-&gt;4)-N-acetyl-beta-D-glucosaminyl derivative + GDP-beta-L-fucose = an alpha-L-Fuc-(1-&gt;2)-beta-D-Gal-(1-&gt;4)-beta-D-GlcNAc derivative + GDP + H(+). It catalyses the reaction a ganglioside GA1 + GDP-beta-L-fucose = a ganglioside Fuc-GA1 + GDP + H(+). The enzyme catalyses a beta-D-Gal-(1-&gt;3)-beta-D-GlcNAc-(1-&gt;3)-beta-D-Gal-(1-&gt;4)-beta-D-Glc-(1&lt;-&gt;1')-Cer(d18:1(4E)) + GDP-beta-L-fucose = alpha-L-fucosyl-(1-&gt;2)- beta-D-galactosyl-(1-&gt;3)-N-acetyl-beta-D-glucosaminyl-(1-&gt;3)-beta-D-galactosyl-(1-&gt;4)-beta-D-glucosyl-(1&lt;-&gt;1')-N-acylsphing-4-enine + GDP + H(+). It carries out the reaction a neolactoside nLc4Cer(d18:1(4E)) + GDP-beta-L-fucose = a neolactoside IV(2)-alpha-Fuc-nLc4Cer(d18:1(4E)) + GDP + H(+). The catalysed reaction is a ganglioside GM1 + GDP-beta-L-fucose = a ganglioside Fuc-GM1 + GDP + H(+). It catalyses the reaction beta-D-galactosyl-(1-&gt;3)-N-acetyl-D-galactosamine + GDP-beta-L-fucose = alpha-L-fucosyl-(1-&gt;2)-beta-D-galactosyl-(1-&gt;3)-N-acetyl-D-galactosamine + GDP + H(+). Its pathway is protein modification; protein glycosylation. Functionally, catalyzes the transfer of L-fucose, from a guanosine diphosphate-beta-L-fucose, to the terminal galactose residue of glycoconjugates through an alpha(1,2) linkage leading to H antigen synthesis that is an intermediate substrate in the synthesis of ABO blood group antigens. H antigen is essential for maturation of the glomerular layer of the main olfactory bulb, in cell migration and early cell-cell contacts during tumor associated angiogenesis. Preferentially fucosylates soluble lactose and to a lesser extent, fucosylates glycolipids gangliosides GA1 and GM1a. In Mus musculus (Mouse), this protein is Galactoside alpha-(1,2)-fucosyltransferase 1.